The primary structure comprises 184 residues: MTTPQIDERAMEAGAAALQETIVDPGPLDVTALAVAAALAAGLHSAADDPAAALDKCIVLDELTEFAEKLVVHDRPGGIGTTVEYVEVYEDASGVRLGTATGNAVVLKMEPHMWQFHQSVSELADGSFEAVGVIDCTAMLRRMTQVLRVTGRSGRYAGKSGFMTLAISDPNQRPPHYSVQVVLC.

A disulfide bridge links C57 with C184. Q115 lines the (1S,3R,6R,8R,9R,11R,14S,15S,19R,20R)-8-ethyl-9,15-dihydroxy-3,4,6,20-tetramethyl-21,23-dioxo-24-azapentacyclo[20.2.1.0(1,6).0(11,20).0(14,19)]pentacosa-4,12,22(25)-trien-25-olate pocket.

As to quaternary structure, homodimer.

The catalysed reaction is 4-[(1R,2R,4aS,5S,8aR)-2-[(2R,3R,5E,7E)-3-ethyl-2-hydroxy-5,7-dimethylnona-5,7-dien-1-yl]-5-hydroxy-1-methyl-1,2,4a,5,6,7,8,8a-octahydronaphthalene-1-carbonyl]-2-methylidene-5-oxo-2,5-dihydro-1H-pyrrol-3-olate = (1S,3R,6R,8R,9R,11R,14S,15S,19R,20R)-8-ethyl-9,15-dihydroxy-3,4,6,20-tetramethyl-21,23-dioxo-24-azapentacyclo[20.2.1.0(1,6).0(11,20).0(14,19)]pentacosa-4,12,22(25)-trien-25-olate. It functions in the pathway antibiotic biosynthesis. In terms of biological role, involved in the biosynthesis of the spirotetramate antibiotics pyrroindomycins. Catalyzes the intramolecular cyclization forming the spiro-conjugate moiety in pyrroindomycins, via an exo-selective [4+2] cycloaddition reaction. The chain is Spiro-conjugate synthase from Streptomyces rugosporus.